The primary structure comprises 1004 residues: Phyllocladan-16-alpha-ol synthase (1004 aa).

The DXDD motif motif lies at 321-324 (DADD). Mg(2+)-binding residues include Asp-667, Glu-671, Asn-872, Asp-873, Ser-876, and Asp-880. The DEXXE motif signature appears at 667-671 (DEFME).

This sequence belongs to the terpene synthase family. Mg(2+) serves as cofactor.

The enzyme catalyses (2E,6E,10E)-geranylgeranyl diphosphate = (+)-copalyl diphosphate. It carries out the reaction (+)-copalyl diphosphate + H2O = phyllocladan-16alpha-ol + diphosphate. In terms of biological role, involved in the synthesis of labdane-related hydrocarbons by catalyzing the conversion of geranylgeranyl diphosphate (GGDP) to phyllocladan-16-alpha-ol in a two step via type B cyclization into a (+)-copalyl diphosphate ((+)-CDP) intermediate. The chain is Phyllocladan-16-alpha-ol synthase (PaDC1) from Phomopsis amygdali (Fusicoccum amygdali).